The sequence spans 380 residues: 1-deoxy-D-xylulose 5-phosphate reductoisomerase 2 (380 aa).

NADPH contacts are provided by S10, G11, S12, I13, G36, K37, N38, and N120. K121 is a binding site for 1-deoxy-D-xylulose 5-phosphate. E122 serves as a coordination point for NADPH. A Mn(2+)-binding site is contributed by D146. Residues S147, E148, S172, and H195 each contribute to the 1-deoxy-D-xylulose 5-phosphate site. E148 contacts Mn(2+). G201 lines the NADPH pocket. Residues S208, N213, K214, and E217 each coordinate 1-deoxy-D-xylulose 5-phosphate. Residue E217 coordinates Mn(2+).

Belongs to the DXR family. The cofactor is Mg(2+). It depends on Mn(2+) as a cofactor.

The enzyme catalyses 2-C-methyl-D-erythritol 4-phosphate + NADP(+) = 1-deoxy-D-xylulose 5-phosphate + NADPH + H(+). It participates in isoprenoid biosynthesis; isopentenyl diphosphate biosynthesis via DXP pathway; isopentenyl diphosphate from 1-deoxy-D-xylulose 5-phosphate: step 1/6. In terms of biological role, catalyzes the NADPH-dependent rearrangement and reduction of 1-deoxy-D-xylulose-5-phosphate (DXP) to 2-C-methyl-D-erythritol 4-phosphate (MEP). The polypeptide is 1-deoxy-D-xylulose 5-phosphate reductoisomerase 2 (Bacillus anthracis).